The sequence spans 469 residues: tRNA-2-methylthio-N(6)-dimethylallyladenosine synthase (469 aa).

Positions lysine 27–arginine 142 constitute an MTTase N-terminal domain. [4Fe-4S] cluster is bound by residues cysteine 36, cysteine 73, cysteine 105, cysteine 179, cysteine 183, and cysteine 186. The region spanning lysine 165–arginine 398 is the Radical SAM core domain. The 67-residue stretch at glutamate 401–leucine 467 folds into the TRAM domain.

This sequence belongs to the methylthiotransferase family. MiaB subfamily. As to quaternary structure, monomer. The cofactor is [4Fe-4S] cluster.

It is found in the cytoplasm. The catalysed reaction is N(6)-dimethylallyladenosine(37) in tRNA + (sulfur carrier)-SH + AH2 + 2 S-adenosyl-L-methionine = 2-methylsulfanyl-N(6)-dimethylallyladenosine(37) in tRNA + (sulfur carrier)-H + 5'-deoxyadenosine + L-methionine + A + S-adenosyl-L-homocysteine + 2 H(+). Catalyzes the methylthiolation of N6-(dimethylallyl)adenosine (i(6)A), leading to the formation of 2-methylthio-N6-(dimethylallyl)adenosine (ms(2)i(6)A) at position 37 in tRNAs that read codons beginning with uridine. In Leptothrix cholodnii (strain ATCC 51168 / LMG 8142 / SP-6) (Leptothrix discophora (strain SP-6)), this protein is tRNA-2-methylthio-N(6)-dimethylallyladenosine synthase.